The following is a 217-amino-acid chain: GrpE protein homolog 1, mitochondrial (217 aa).

The transit peptide at 1–27 (MAARCVRLARRSLPALALSFRPSPRLL) directs the protein to the mitochondrion. Residues 37–56 (GQNLDEDLGHCEPKTDPPSA) are disordered. The residue at position 94 (lysine 94) is an N6-acetyllysine; alternate. Residue lysine 94 is modified to N6-succinyllysine; alternate. Residue lysine 100 is modified to N6-acetyllysine. The residue at position 120 (lysine 120) is an N6-succinyllysine. The residue at position 215 (lysine 215) is an N6-acetyllysine; alternate. N6-succinyllysine; alternate is present on lysine 215.

The protein belongs to the GrpE family. Probable component of the PAM complex at least composed of a mitochondrial HSP70 protein, GRPEL1 or GRPEL2, TIMM44, TIMM16/PAM16 and TIMM14/DNAJC19. Binds to HSP70, HSC70 and HSJ1B.

It localises to the mitochondrion matrix. Its function is as follows. Essential component of the PAM complex, a complex required for the translocation of transit peptide-containing proteins from the inner membrane into the mitochondrial matrix in an ATP-dependent manner. Seems to control the nucleotide-dependent binding of mitochondrial HSP70 to substrate proteins. This Mus musculus (Mouse) protein is GrpE protein homolog 1, mitochondrial (Grpel1).